The sequence spans 148 residues: Snaclec B3/B5 (148 aa).

Residues 1-24 form the signal peptide; that stretch reads MGRFIFVSFGLLVVFLSLSGTGAA. Intrachain disulfides connect cysteine 27/cysteine 38, cysteine 55/cysteine 144, and cysteine 121/cysteine 136. A C-type lectin domain is found at 34–145; sequence YDQHCYKVFD…CRLLGHFVCK (112 aa).

Belongs to the snaclec family. As to quaternary structure, heterodimer; disulfide-linked. Expressed by the venom gland.

Its subcellular location is the secreted. Its function is as follows. Interferes with one step of hemostasis (modulation of platelet aggregation, or coagulation cascade, for example). In Macrovipera lebetinus (Levantine viper), this protein is Snaclec B3/B5.